The chain runs to 250 residues: Mediator of RNA polymerase II transcription subunit 6 (250 aa).

The interval 166–250 is disordered; it reads KKREEEKKED…EPTARTTSKQ (85 aa). Acidic residues predominate over residues 204–223; it reads PAEDALEREEKEEVEEEEEE. Residues 224-239 show a composition bias toward basic and acidic residues; the sequence is TLKTEEPTTSTDEPKF.

Belongs to the Mediator complex subunit 6 family. As to quaternary structure, component of the Mediator complex. Interacts with let-19/mdt-13. Interacts with RNA polymerase II. Interacts with mdt-28.

Its subcellular location is the nucleus. Functionally, component of the Mediator complex, a coactivator involved in the regulated transcription of nearly all RNA polymerase II-dependent genes. Mediator functions as a bridge to convey information from gene-specific regulatory proteins to the basal RNA polymerase II transcription machinery. Mediator is recruited to promoters by direct interactions with regulatory proteins and serves as a scaffold for the assembly of a functional preinitiation complex with RNA polymerase II and the general transcription factors. Acts to repress beta-catenin target genes. Required for asymmetric division of T-cells and for gonad and germ cell development. In Caenorhabditis elegans, this protein is Mediator of RNA polymerase II transcription subunit 6 (mdt-6).